The chain runs to 1381 residues: MKAPAVLAPGILLLLFTLVQRSNGECKEALTKSEMNVNMKYQLPNFTAETPIQNVILHEHHIFLGATNYIYVLNEEDLQKVAEHRTGPVLEHPDCFPCQDCSSKANLSGGVWKDNINMALVVDTYYDDQLISCGSVNRGTCQRHVFPHNHTADIQSEVHCIFSPQTEEPSQCPDCVVSALGTKVLLSVKHRFLNFFVGNTINSSYFPDHSLHSISVRRLKETKDGFMFLTDQSYVDVLPEFRDSYPIKYVHAFESNNFIYFLTVQRETLNAQTFHTRIIRFCSINSALHSYMEMPLECILTEKRKKRSTKKEVFNILQAAYVSKPGAQLARQIGASLNDDILFGVFAQSKPDSAEPMDRSAVCAFPIKYVNDFFNKIVNKNNVRCLQHFYGPNHEHCFNRTFQRNLLGCEARRDEYRTEFTTALQRIDLFAGQFNKVLLTSISTFVKGDLTIANLGTSEGRFIQIVVSRSVPSTPHVNFLLDFHPVSPEVIVEHPLNQNGYTLVVTGKKITKIPLNGLGCRHFQSCSQCLSAPSFVQCGWCHDKCVQSEECSSGTWTQETCLPTIYKVFPTSAPLEGGTRLTICGWDFGFRRNNKFDLKKTRVLLGNESCTLTLSESTMNTLKCTVGPAMNEHFNMSIIISNSHGTTQYSTFSYVDPIITSISPRYGPMSGGTLLTLTGNYLNSGNSRHISIGGKTCTLKSVSNSILECYTPAQTISTEFPVKLKIDLANRETSIFSYREDPIVYEIHPTKSFISGGSTITGIGKNLNSVSVPRMVINLHEARRNFTVACQHRSNSEIICCTTPSLQQLNLQLPLKTKAFFMLDGILSKYFDLIYVHNPVFKPFEKPVMISMGNENVLEIKGNDIDPEAVKGEVLKVGNKSCENIHLHSQAVLCTVPSDLLKLNSELNIEWKQAISSTVLGKVIVQPDQNFTGLIAGVVSISIALLLLLGLFLWLKKRKQIKDLGSELVRYDARVHTPHLDRLVSARSVSPTTEMVSNESVDYRATFPEDQFPNSSQNGSCRQVQYPLTDMSPILTSGDSDISSPLLQNTVHIDLSALNPELVQAVQHVVIGPSSLIVHFNEVIGRGHFGCVYHGTLLDNDGKKIHCAVKSLNRITDIGEVSQFLTEGIIMKDFSHPNVLSLLGICLRSEGSPLVVLPYMKHGDLRNFIRNETHNPTVKDLIGFGLQVAKGMKYLASKKFVHRDLAARNCMLDEKFTVKVADFGLARDMYDKEYYSVHNKTGAKLPVKWMALESLQTQKFTTKSDVWSFGVLLWELMTRGAPPYPDVNTFDITVYLLQGRRLLQPEYCPDPLYEVMLKCWHPKAEMRPSFSELVSRISAIFSTFIGEHYVHVNATYVNVKCVAPYPSLLSSQDNPDGEVDT.

The first 24 residues, 1-24, serve as a signal peptide directing secretion; the sequence is MKAPAVLAPGILLLLFTLVQRSNG. The Extracellular portion of the chain corresponds to 25 to 932; it reads ECKEALTKSE…VIVQPDQNFT (908 aa). One can recognise a Sema domain in the interval 27-515; the sequence is KEALTKSEMN…TGKKITKIPL (489 aa). N-linked (GlcNAc...) asparagine glycosylation occurs at Asn-45. 4 disulfides stabilise this stretch: Cys-95-Cys-101, Cys-98-Cys-160, Cys-133-Cys-141, and Cys-172-Cys-175. N-linked (GlcNAc...) asparagine glycosylation occurs at Asn-106. N-linked (GlcNAc...) asparagine glycosylation is present at Asn-149. N-linked (GlcNAc...) asparagine glycosylation occurs at Asn-202. Intrachain disulfides connect Cys-298/Cys-363 and Cys-385/Cys-397. A glycan (N-linked (GlcNAc...) asparagine) is linked at Asn-399. 4 cysteine pairs are disulfide-bonded: Cys-520-Cys-538, Cys-526-Cys-561, Cys-529-Cys-545, and Cys-541-Cys-551. 3 IPT/TIG domains span residues 563-655, 657-739, and 742-836; these read PTIY…FSYV, PIIT…FSYR, and PIVY…LIYV. Thr-582 is a glycosylation site (O-linked (Man) threonine). N-linked (GlcNAc...) asparagine glycans are attached at residues Asn-607 and Asn-635. Residues Thr-676 and Thr-761 are each glycosylated (O-linked (Man) threonine). Asn-785, Asn-879, and Asn-930 each carry an N-linked (GlcNAc...) asparagine glycan. A helical membrane pass occupies residues 933–955; that stretch reads GLIAGVVSISIALLLLLGLFLWL. Over 956-1381 the chain is Cytoplasmic; that stretch reads KKRKQIKDLG…QDNPDGEVDT (426 aa). At Ser-966 the chain carries Phosphoserine. Thr-977 carries the post-translational modification Phosphothreonine. Phosphoserine is present on residues Ser-990, Ser-997, and Ser-1000. At Tyr-1003 the chain carries Phosphotyrosine. Residues 1078–1345 form the Protein kinase domain; the sequence is VHFNEVIGRG…RISAIFSTFI (268 aa). ATP contacts are provided by residues 1084 to 1092 and Lys-1110; that span reads IGRGHFGCV. Asp-1204 (proton acceptor) is an active-site residue. Residues 1212-1381 are interaction with RANBP9; it reads LDEKFTVKVA…QDNPDGEVDT (170 aa). Tyr-1230 carries the post-translational modification Phosphotyrosine. A phosphotyrosine; by autocatalysis mark is found at Tyr-1234 and Tyr-1235. Thr-1289 carries the post-translational modification Phosphothreonine. An interaction with MUC20 region spans residues 1320–1359; the sequence is WHPKAEMRPSFSELVSRISAIFSTFIGEHYVHVNATYVNV. Phosphotyrosine; by autocatalysis occurs at positions 1349 and 1356. Tyr-1365 is subject to Phosphotyrosine.

It belongs to the protein kinase superfamily. Tyr protein kinase family. Heterodimer made of an alpha chain (50 kDa) and a beta chain (145 kDa) which are disulfide linked. Binds PLXNB1. Interacts when phosphorylated with downstream effectors including STAT3, PIK3R1, SRC, PCLG1, GRB2 and GAB1. Interacts with SPSB1, SPSB2 and SPSB4. Interacts with INPP5D/SHIP1. When phosphorylated at Tyr-1356, interacts with INPPL1/SHIP2. Interacts with RANBP9 and RANBP10, as well as SPSB1, SPSB2, SPSB3 and SPSB4. SPSB1 binding occurs in the presence and in the absence of HGF, however HGF treatment has a positive effect on this interaction. Interacts with MUC20; prevents interaction with GRB2 and suppresses hepatocyte growth factor-induced cell proliferation. Interacts with GRB10. Interacts with PTPN1 and PTPN2. Interacts with tensin TNS3. Interacts (when phosphorylated) with tensin TNS4 (via SH2 domain); the interaction increases MET protein stability by inhibiting MET endocytosis and subsequent lysosomal degradation. Post-translationally, autophosphorylated in response to ligand binding on Tyr-1234 and Tyr-1235 in the kinase domain leading to further phosphorylation of Tyr-1349 and Tyr-1356 in the C-terminal multifunctional docking site. Dephosphorylated by PTPRJ at Tyr-1349 and Tyr-1365. Dephosphorylated by PTPN1 and PTPN2. In terms of processing, ubiquitinated. Ubiquitination by CBL regulates the receptor stability and activity through proteasomal degradation. O-mannosylation of IPT/TIG domains by TMEM260 is required for protein maturation. O-mannosylated residues are composed of single mannose glycans that are not elongated or modified.

The protein localises to the membrane. It carries out the reaction L-tyrosyl-[protein] + ATP = O-phospho-L-tyrosyl-[protein] + ADP + H(+). Its activity is regulated as follows. In its inactive state, the C-terminal tail interacts with the catalytic domain and inhibits the kinase activity. Upon ligand binding, the C-terminal tail is displaced and becomes phosphorylated, thus increasing the kinase activity. In terms of biological role, receptor tyrosine kinase that transduces signals from the extracellular matrix into the cytoplasm by binding to hepatocyte growth factor/HGF ligand. Regulates many physiological processes including proliferation, scattering, morphogenesis and survival. Ligand binding at the cell surface induces autophosphorylation of MET on its intracellular domain that provides docking sites for downstream signaling molecules. Following activation by ligand, interacts with the PI3-kinase subunit PIK3R1, PLCG1, SRC, GRB2, STAT3 or the adapter GAB1. Recruitment of these downstream effectors by MET leads to the activation of several signaling cascades including the RAS-ERK, PI3 kinase-AKT, or PLCgamma-PKC. The RAS-ERK activation is associated with the morphogenetic effects while PI3K/AKT coordinates prosurvival effects. During embryonic development, MET signaling plays a role in gastrulation, development and migration of muscles and neuronal precursors, angiogenesis and kidney formation. In adults, participates in wound healing as well as organ regeneration and tissue remodeling. Also promotes differentiation and proliferation of hematopoietic cells. The chain is Hepatocyte growth factor receptor (MET) from Aotus nancymaae (Ma's night monkey).